The sequence spans 173 residues: Co-chaperone protein HscB homolog (173 aa).

In terms of domain architecture, J spans 2–74 (NYFELFSLSP…ISRAEHMLSL (73 aa)).

This sequence belongs to the HscB family. Interacts with HscA and stimulates its ATPase activity.

Functionally, co-chaperone involved in the maturation of iron-sulfur cluster-containing proteins. Seems to help targeting proteins to be folded toward HscA. The polypeptide is Co-chaperone protein HscB homolog (Shewanella loihica (strain ATCC BAA-1088 / PV-4)).